An 81-amino-acid chain; its full sequence is ATP synthase subunit c, chloroplastic (81 aa).

2 consecutive transmembrane segments (helical) span residues 3–23 (PLISAASVIAAGLAVGLASIG) and 57–77 (LAFMEALSIYGLVVALALLFA).

The protein belongs to the ATPase C chain family. As to quaternary structure, F-type ATPases have 2 components, F(1) - the catalytic core - and F(0) - the membrane proton channel. F(1) has five subunits: alpha(3), beta(3), gamma(1), delta(1), epsilon(1). F(0) has four main subunits: a(1), b(1), b'(1) and c(10-14). The alpha and beta chains form an alternating ring which encloses part of the gamma chain. F(1) is attached to F(0) by a central stalk formed by the gamma and epsilon chains, while a peripheral stalk is formed by the delta, b and b' chains.

It localises to the plastid. Its subcellular location is the chloroplast thylakoid membrane. In terms of biological role, f(1)F(0) ATP synthase produces ATP from ADP in the presence of a proton or sodium gradient. F-type ATPases consist of two structural domains, F(1) containing the extramembraneous catalytic core and F(0) containing the membrane proton channel, linked together by a central stalk and a peripheral stalk. During catalysis, ATP synthesis in the catalytic domain of F(1) is coupled via a rotary mechanism of the central stalk subunits to proton translocation. Key component of the F(0) channel; it plays a direct role in translocation across the membrane. A homomeric c-ring of between 10-14 subunits forms the central stalk rotor element with the F(1) delta and epsilon subunits. This is ATP synthase subunit c, chloroplastic from Gossypium barbadense (Sea Island cotton).